The following is a 534-amino-acid chain: MSDVSNEAARRRTFAIISHPDAGKTTLTEKLLLFGGAIQMAGSVKGRKAARHATSDWMALEKERGISVTSSVMQFPYEGKIVNLLDTPGHADFGEDTYRVLTAVDSALMVIDVAKGVEERTIKLMEVCRLRDTPIMTFINKLDREGKNPIDLLDEVETVLGIQCAPVTWPIGMGQRLKGVVHLISGEVHLYEQGRNFTRQDSTIFPSLDAPGLAEKIGEQMLTELRDELELVQGASNPFDLDAYRAGQQTPVFFGSGVNNFGVQPLLDFFIEHAPPPQTRETTGRRVAPSETKLSGFVFKIQANMDPQHRDRVAFMRVCSGKFTAGMKTLHVRSGKDVKLANALTFMASDREIAAEAWPGDVIGIHNHGTISIGDTFTEGESLSFTGIPNFAPELFRRARLRDPLKLKQLQKGLAQLSEEGATQFFRPLMSNDLILGAVGVLQFDVVAYRLKDEYGVDAIFEPVSVTTARWVHCDNVKKLDEFREKNAGNLGIDAAGQLVYLAPTRVNLQLAQERAPDVRFSATREHAHAKAID.

The tr-type G domain occupies 9–278 (ARRRTFAIIS…FFIEHAPPPQ (270 aa)). GTP is bound by residues 18–25 (SHPDAGKT), 86–90 (DTPGH), and 140–143 (NKLD).

It belongs to the TRAFAC class translation factor GTPase superfamily. Classic translation factor GTPase family. PrfC subfamily.

It localises to the cytoplasm. In terms of biological role, increases the formation of ribosomal termination complexes and stimulates activities of RF-1 and RF-2. It binds guanine nucleotides and has strong preference for UGA stop codons. It may interact directly with the ribosome. The stimulation of RF-1 and RF-2 is significantly reduced by GTP and GDP, but not by GMP. This chain is Peptide chain release factor 3, found in Xanthomonas oryzae pv. oryzae (strain MAFF 311018).